A 381-amino-acid chain; its full sequence is Deoxyguanosinetriphosphate triphosphohydrolase-like protein (381 aa).

Residues 76 to 203 (RMTHTLEVAG…ADLSDEIAYT (128 aa)) form the HD domain.

This sequence belongs to the dGTPase family. Type 2 subfamily.

The polypeptide is Deoxyguanosinetriphosphate triphosphohydrolase-like protein (Leptospira borgpetersenii serovar Hardjo-bovis (strain JB197)).